A 130-amino-acid chain; its full sequence is Small ribosomal subunit protein uS11 (130 aa).

It belongs to the universal ribosomal protein uS11 family. As to quaternary structure, part of the 30S ribosomal subunit. Interacts with proteins S7 and S18. Binds to IF-3.

Its function is as follows. Located on the platform of the 30S subunit, it bridges several disparate RNA helices of the 16S rRNA. Forms part of the Shine-Dalgarno cleft in the 70S ribosome. This chain is Small ribosomal subunit protein uS11, found in Campylobacter lari (strain RM2100 / D67 / ATCC BAA-1060).